A 314-amino-acid polypeptide reads, in one-letter code: 4-hydroxy-3-methylbut-2-enyl diphosphate reductase (314 aa).

Cys12 serves as a coordination point for [4Fe-4S] cluster. Positions 41 and 74 each coordinate (2E)-4-hydroxy-3-methylbut-2-enyl diphosphate. Dimethylallyl diphosphate-binding residues include His41 and His74. The isopentenyl diphosphate site is built by His41 and His74. [4Fe-4S] cluster is bound at residue Cys96. Position 124 (His124) interacts with (2E)-4-hydroxy-3-methylbut-2-enyl diphosphate. A dimethylallyl diphosphate-binding site is contributed by His124. His124 serves as a coordination point for isopentenyl diphosphate. Glu126 acts as the Proton donor in catalysis. Thr167 provides a ligand contact to (2E)-4-hydroxy-3-methylbut-2-enyl diphosphate. Cys197 is a binding site for [4Fe-4S] cluster. Ser225, Ser226, Asn227, and Ser269 together coordinate (2E)-4-hydroxy-3-methylbut-2-enyl diphosphate. Positions 225, 226, 227, and 269 each coordinate dimethylallyl diphosphate. Ser225, Ser226, Asn227, and Ser269 together coordinate isopentenyl diphosphate.

This sequence belongs to the IspH family. [4Fe-4S] cluster serves as cofactor.

The catalysed reaction is isopentenyl diphosphate + 2 oxidized [2Fe-2S]-[ferredoxin] + H2O = (2E)-4-hydroxy-3-methylbut-2-enyl diphosphate + 2 reduced [2Fe-2S]-[ferredoxin] + 2 H(+). It catalyses the reaction dimethylallyl diphosphate + 2 oxidized [2Fe-2S]-[ferredoxin] + H2O = (2E)-4-hydroxy-3-methylbut-2-enyl diphosphate + 2 reduced [2Fe-2S]-[ferredoxin] + 2 H(+). The protein operates within isoprenoid biosynthesis; dimethylallyl diphosphate biosynthesis; dimethylallyl diphosphate from (2E)-4-hydroxy-3-methylbutenyl diphosphate: step 1/1. Its pathway is isoprenoid biosynthesis; isopentenyl diphosphate biosynthesis via DXP pathway; isopentenyl diphosphate from 1-deoxy-D-xylulose 5-phosphate: step 6/6. In terms of biological role, catalyzes the conversion of 1-hydroxy-2-methyl-2-(E)-butenyl 4-diphosphate (HMBPP) into a mixture of isopentenyl diphosphate (IPP) and dimethylallyl diphosphate (DMAPP). Acts in the terminal step of the DOXP/MEP pathway for isoprenoid precursor biosynthesis. The polypeptide is 4-hydroxy-3-methylbut-2-enyl diphosphate reductase (Haemophilus influenzae (strain ATCC 51907 / DSM 11121 / KW20 / Rd)).